The primary structure comprises 414 residues: MSQANLSETLFKPRFKHPETSTLVRRFNHGTQPSVQSTLDGKNVPHWYRMINRLMWIWRGIDPREILDVQARIVMSEAERTDKELYDTVIGYRGGNWIFEWSKQAMEWQQKACQETDPQRSGRHWLHASSLYNIAAYPHLKGDELAEQAQALANRAYEEAAQRLPGSLREMAFSIPGGAPVTAFLHMPKGDGPFPTVLMCGGLDSMQTDYYTLFERYFAPRGMAMLTLDMPSVGFSSKWKLTQDSSLLHQHVLKALPGVPWVDHTRVVAFGFRFGANVAVRLAYLEAPRLKAVACLGPVVHALLSDSQRQGTVPEMYLDVLASRLGMHDASDEALRVELNRYSLKVQGLLGRRCPTPMLSGFWKNDPFSPEEESRLITSSSSDGKLMEIPFNPVYRNFDTALKEITGWINHRLC.

Belongs to the FrsA family.

It carries out the reaction a carboxylic ester + H2O = an alcohol + a carboxylate + H(+). In terms of biological role, catalyzes the hydrolysis of esters. The sequence is that of Esterase FrsA from Citrobacter koseri (strain ATCC BAA-895 / CDC 4225-83 / SGSC4696).